A 615-amino-acid polypeptide reads, in one-letter code: MSTNFAATTFTDPSKIRNFCIIAHIDHGKSTLADRILQLSQVVEERDMRDQYLDNMDIERERGITIKAQNVRLPWIPRSGEFEGQEIVMQMIDTPGHVDFTYEVSRALEACEGAILLVDAAQGIEAQTLANLYLAMENDLEIIPVLNKIDLPAADPEKYALEIAHIIGCEPEEVLRVSGKTGEGVPELLDKVAELIPAPTSEFGEDAPARAMVFDSVYDTYRGVVTYIRMMDGKLTPRQKVTMMATGTNHELLEVGIVSPTMQKCKGLGPGEVGYLITGVKNVRETKVGDTITWASNGASEPLKGYADPNPMVYSGLFPISQADFPDLRDALEKLQLNDASLTFEPETSVALGFGFRCGFLGLLHMEITRDRLEREFGLDLISTAPSVTYRVVAEDGEESMVHNPSDWPGGKLREVYEPIVKMTIIVPEEFVGSTMELCQSKRGQMGGMDYLSEDRVELRYTMPLGEIIFDFFDMLKSRTKGYASLNYEEAGEQLADLVKVDILLNGDPVDAFSAIVHRDSAQWYGNKMTKKLKELIPRQQFEVPVQAAIGSKIIARENIRAMRKDVLAKCYGGDISRKRKLLEKQKAGKKRMKSIGSVSVPQEAFVAALSTDAE.

In terms of domain architecture, tr-type G spans 14–200 (SKIRNFCIIA…KVAELIPAPT (187 aa)). Residues 26 to 31 (DHGKST) and 147 to 150 (NKID) contribute to the GTP site.

It belongs to the TRAFAC class translation factor GTPase superfamily. Classic translation factor GTPase family. LepA subfamily.

It is found in the cell membrane. It catalyses the reaction GTP + H2O = GDP + phosphate + H(+). Functionally, required for accurate and efficient protein synthesis under certain stress conditions. May act as a fidelity factor of the translation reaction, by catalyzing a one-codon backward translocation of tRNAs on improperly translocated ribosomes. Back-translocation proceeds from a post-translocation (POST) complex to a pre-translocation (PRE) complex, thus giving elongation factor G a second chance to translocate the tRNAs correctly. Binds to ribosomes in a GTP-dependent manner. The protein is Elongation factor 4 of Corynebacterium aurimucosum (strain ATCC 700975 / DSM 44827 / CIP 107346 / CN-1) (Corynebacterium nigricans).